Here is an 81-residue protein sequence, read N- to C-terminus: Centromere protein X (81 aa).

N-acetylmethionine is present on Met-1.

This sequence belongs to the CENP-X/MHF2 family. Heterodimer with CENPX, sometimes called MHF; this interaction stabilizes both partners. MHF heterodimers can assemble to form tetrameric structures. MHF also coassemble with CENPT-CENPW heterodimers at centromeres to form the tetrameric CENP-T-W-S-X complex. Forms a discrete complex with FANCM and CENPX, called FANCM-MHF; this interaction, probably mediated by direct binding between CENPS and FANCM, leads to synergistic activation of double-stranded DNA binding and strongly stimulates FANCM-mediated DNA remodeling. Recruited by FANCM to the Fanconi anemia (FA) core complex, which consists of CENPS, CENPX, FANCA, FANCB, FANCC, FANCE, FANCF, FANCG, FANCL, FANCM, FAAP24 and FAAP100. The FA core complex associates with Bloom syndrome (BLM) complex, which consists of at least BLM, DNA topoisomerase 3-alpha (TOP3A), RMI1/BLAP75, RPA1/RPA70 and RPA2/RPA32. The super complex between FA and BLM is called BRAFT.

It is found in the nucleus. Its subcellular location is the chromosome. The protein localises to the centromere. The protein resides in the kinetochore. Its function is as follows. DNA-binding component of the Fanconi anemia (FA) core complex. Required for the normal activation of the FA pathway, leading to monoubiquitination of the FANCI-FANCD2 complex in response to DNA damage, cellular resistance to DNA cross-linking drugs, and prevention of chromosomal breakage. In complex with CENPS (MHF heterodimer), crucial cofactor for FANCM in both binding and ATP-dependent remodeling of DNA. Stabilizes FANCM. In complex with CENPS and FANCM (but not other FANC proteins), rapidly recruited to blocked forks and promotes gene conversion at blocked replication forks. In complex with CENPS, CENPT and CENPW (CENP-T-W-S-X heterotetramer), involved in the formation of a functional kinetochore outer plate, which is essential for kinetochore-microtubule attachment and faithful mitotic progression. As a component of MHF and CENP-T-W-S-X complexes, binds DNA and bends it to form a nucleosome-like structure. DNA-binding function is fulfilled in the presence of CENPS, with the following preference for DNA substates: Holliday junction &gt; double-stranded &gt; splay arm &gt; single-stranded. Does not bind DNA on its own. The polypeptide is Centromere protein X (CENPX) (Homo sapiens (Human)).